The sequence spans 421 residues: Succinate--CoA ligase [ADP-forming] subunit beta, mitochondrial (421 aa).

Residues 1–26 (MRGLVNKLVSRSLSISGKWQNQQLRR) constitute a mitochondrion transit peptide. The 244-residue stretch at 35 to 278 (AELMGKYGVN…PTQEDPREVA (244 aa)) folds into the ATP-grasp domain. Residues lysine 74, 81–83 (GRG), and glutamate 141 contribute to the ATP site. Mg(2+) is bound by residues asparagine 233 and aspartate 247. Substrate is bound by residues asparagine 298 and 355 to 357 (GIM).

This sequence belongs to the succinate/malate CoA ligase beta subunit family. In terms of assembly, heterodimer of an alpha and a beta subunit. Mg(2+) is required as a cofactor.

The protein resides in the mitochondrion. The catalysed reaction is succinate + ATP + CoA = succinyl-CoA + ADP + phosphate. It functions in the pathway carbohydrate metabolism; tricarboxylic acid cycle; succinate from succinyl-CoA (ligase route): step 1/1. Succinyl-CoA synthetase functions in the citric acid cycle (TCA), coupling the hydrolysis of succinyl-CoA to the synthesis of ATP and thus represents the only step of substrate-level phosphorylation in the TCA. The beta subunit provides nucleotide specificity of the enzyme and binds the substrate succinate, while the binding sites for coenzyme A and phosphate are found in the alpha subunit. The sequence is that of Succinate--CoA ligase [ADP-forming] subunit beta, mitochondrial from Arabidopsis thaliana (Mouse-ear cress).